Reading from the N-terminus, the 356-residue chain is Glycerol-1-phosphate dehydrogenase [NAD(P)+] (356 aa).

Residues 103–107 (GRSID) and 125–128 (TAAS) contribute to the NAD(+) site. Position 130 (Asp130) interacts with substrate. Position 134 (Ser134) interacts with NAD(+). Asp177 contacts substrate. Asp177 and His257 together coordinate Zn(2+). Residue His261 participates in substrate binding. His273 lines the Zn(2+) pocket.

This sequence belongs to the glycerol-1-phosphate dehydrogenase family. Zn(2+) is required as a cofactor.

The protein localises to the cytoplasm. It catalyses the reaction sn-glycerol 1-phosphate + NAD(+) = dihydroxyacetone phosphate + NADH + H(+). It carries out the reaction sn-glycerol 1-phosphate + NADP(+) = dihydroxyacetone phosphate + NADPH + H(+). It participates in membrane lipid metabolism; glycerophospholipid metabolism. Its function is as follows. Catalyzes the NAD(P)H-dependent reduction of dihydroxyacetonephosphate (DHAP or glycerone phosphate) to glycerol 1-phosphate (G1P). The G1P thus generated is used as the glycerophosphate backbone of phospholipids in the cellular membranes of Archaea. In Methanosarcina acetivorans (strain ATCC 35395 / DSM 2834 / JCM 12185 / C2A), this protein is Glycerol-1-phosphate dehydrogenase [NAD(P)+].